The primary structure comprises 253 residues: REF/SRPP-like protein Os05g0151300/LOC_Os05g05940 (253 aa).

Residues 1-26 (MADSGSDAPISNRPEEEVTVEKTPEM) are disordered. Over residues 13-26 (RPEEEVTVEKTPEM) the composition is skewed to basic and acidic residues.

The protein belongs to the REF/SRPP family.

This Oryza sativa subsp. japonica (Rice) protein is REF/SRPP-like protein Os05g0151300/LOC_Os05g05940.